Consider the following 427-residue polypeptide: 3-phosphoshikimate 1-carboxyvinyltransferase (427 aa).

3-phosphoshikimate contacts are provided by Lys-22, Ser-23, and Arg-27. Position 22 (Lys-22) interacts with phosphoenolpyruvate. Gly-96 and Arg-124 together coordinate phosphoenolpyruvate. 3-phosphoshikimate contacts are provided by Ser-169, Ser-170, Gln-171, Ser-197, Asp-313, Asn-336, and Lys-340. Gln-171 provides a ligand contact to phosphoenolpyruvate. Asp-313 functions as the Proton acceptor in the catalytic mechanism. Arg-344, Arg-386, and Lys-411 together coordinate phosphoenolpyruvate.

Belongs to the EPSP synthase family. Monomer.

It localises to the cytoplasm. The catalysed reaction is 3-phosphoshikimate + phosphoenolpyruvate = 5-O-(1-carboxyvinyl)-3-phosphoshikimate + phosphate. Its pathway is metabolic intermediate biosynthesis; chorismate biosynthesis; chorismate from D-erythrose 4-phosphate and phosphoenolpyruvate: step 6/7. Functionally, catalyzes the transfer of the enolpyruvyl moiety of phosphoenolpyruvate (PEP) to the 5-hydroxyl of shikimate-3-phosphate (S3P) to produce enolpyruvyl shikimate-3-phosphate and inorganic phosphate. The polypeptide is 3-phosphoshikimate 1-carboxyvinyltransferase (Escherichia coli O17:K52:H18 (strain UMN026 / ExPEC)).